Consider the following 980-residue polypeptide: GPI inositol-deacylase (980 aa).

Residues 1 to 7 (MFMFRNC) lie on the Cytoplasmic side of the membrane. The helical transmembrane segment at 8-28 (AVLLVIGSICCFIYGLFRLHV) threads the bilayer. At 29–628 (EVEPNACRMT…EYSYSSALSR (600 aa)) the chain is on the lumenal side. Residue Ser-170 is part of the active site. N-linked (GlcNAc...) asparagine glycans are attached at residues Asn-427, Asn-517, and Asn-596. The chain crosses the membrane as a helical span at residues 629-649 (LVLEFYGWLPAHLVCVLLIVL). Residues 650–709 (RKQVETFYDVGTFRSLRPYVGYLQYTSLYIVTACRLLKKLIISSRVFPEPEPLDYSINVS) are Cytoplasmic-facing. A helical transmembrane segment spans residues 710 to 730 (IVIHCAAIALSLLATLGTWLA). At 731 to 774 (LTLYGNAFYRLALRITRLSQATSNVMISIMTHLPITYGILTIAT) the chain is on the lumenal side. Residues 775-795 (AMGTCSGVGLLLAFVFYFLML) traverse the membrane as a helical segment. The Cytoplasmic segment spans residues 796 to 867 (SNAYKDYLED…CVGLQNFSFH (72 aa)). Residues 821-853 (AVTEQEDATEEQNEEQNALKQNDEQKQQQQEEE) are disordered. Positions 824-834 (EQEDATEEQNE) are enriched in acidic residues. Residues 868–888 (VTLLLMLFVQLLLNAPSSLAW) traverse the membrane as a helical segment. Over 889-895 (LRSRRHG) the chain is Lumenal. Residues 896 to 916 (INLPDPSLYPSIVVLASLSLL) traverse the membrane as a helical segment. At 917 to 929 (LQLRAPQKCQGYW) the chain is on the cytoplasmic side. A helical membrane pass occupies residues 930-950 (MLSIAFYILAGVVLLYCQAAI). At 951 to 954 (YRLT) the chain is on the lumenal side. A helical transmembrane segment spans residues 955–975 (YVIAGAFALLSAHQSLWILWG). At 976 to 980 (RVSRV) the chain is on the cytoplasmic side.

It belongs to the GPI inositol-deacylase family.

The protein resides in the endoplasmic reticulum membrane. Functionally, involved in inositol deacylation of GPI-anchored proteins. The protein is GPI inositol-deacylase of Drosophila melanogaster (Fruit fly).